The following is a 502-amino-acid chain: Xylan O-acetyltransferase 13 (502 aa).

At 1–53 (MWSALFSHLREVHKRSGVKEEKLIMKSPPAAGEAGCHKPQATATNKMTVLQSP) the chain is on the cytoplasmic side. The helical; Signal-anchor for type II membrane protein transmembrane segment at 54–76 (LGLRTILTSLVAFFIVVSSVSLL) threads the bilayer. Residues 77–502 (FDRGQDAQAQ…EFLYAYIMHK (426 aa)) are Lumenal-facing. 4 disulfide bridges follow: Cys152–Cys203, Cys174–Cys239, Cys183–Cys483, and Cys399–Cys479. N-linked (GlcNAc...) asparagine glycans are attached at residues Asn153, Asn163, Asn189, and Asn209. The short motif at 226–228 (GDS) is the GDS motif element. The active-site Nucleophile is Ser228. N-linked (GlcNAc...) asparagine glycans are attached at residues Asn255, Asn267, Asn372, Asn401, and Asn442. Asp478 acts as the Proton donor in catalysis. Positions 478 to 481 (DCTH) match the DXXH motif motif. The active-site Proton acceptor is the His481.

This sequence belongs to the PC-esterase family. TBL subfamily.

It localises to the golgi apparatus membrane. In terms of biological role, xylan acetyltransferase required for 2-O- and 3-O-monoacetylation of xylosyl residues in xylan. Catalyzes the 2-O-acetylation of xylan, followed by nonenzymatic acetyl migration to the O-3 position, resulting in products that are monoacetylated at both O-2 and O-3 positions. In Oryza sativa subsp. japonica (Rice), this protein is Xylan O-acetyltransferase 13.